We begin with the raw amino-acid sequence, 322 residues long: 4-diphosphocytidyl-2-C-methyl-D-erythritol kinase (322 aa).

Lys18 is an active-site residue. 130–140 (PMGAGLGGGSS) lines the ATP pocket. The active site involves Asp172.

This sequence belongs to the GHMP kinase family. IspE subfamily.

It catalyses the reaction 4-CDP-2-C-methyl-D-erythritol + ATP = 4-CDP-2-C-methyl-D-erythritol 2-phosphate + ADP + H(+). It participates in isoprenoid biosynthesis; isopentenyl diphosphate biosynthesis via DXP pathway; isopentenyl diphosphate from 1-deoxy-D-xylulose 5-phosphate: step 3/6. In terms of biological role, catalyzes the phosphorylation of the position 2 hydroxy group of 4-diphosphocytidyl-2C-methyl-D-erythritol. The chain is 4-diphosphocytidyl-2-C-methyl-D-erythritol kinase from Psychrobacter arcticus (strain DSM 17307 / VKM B-2377 / 273-4).